Reading from the N-terminus, the 573-residue chain is Probable cytochrome c oxidase subunit 1 (573 aa).

The chain crosses the membrane as a helical span at residues isoleucine 40 to leucine 60. Histidine 86 contacts Fe(II)-heme a. 6 consecutive transmembrane segments (helical) span residues isoleucine 89–leucine 109, leucine 121–isoleucine 141, leucine 170–isoleucine 190, isoleucine 213–glycine 233, leucine 258–valine 278, and isoleucine 290–valine 310. Histidine 264 and tyrosine 268 together coordinate Cu cation. A cross-link (1'-histidyl-3'-tyrosine (His-Tyr)) is located at residues histidine 264–tyrosine 268. The Cu cation site is built by histidine 313 and histidine 314. The next 2 membrane-spanning stretches (helical) occupy residues methionine 315–valine 335 and methionine 359–leucine 379. Position 397 (histidine 397) interacts with heme a3. 3 consecutive transmembrane segments (helical) span residues phenylalanine 398 to phenylalanine 418, leucine 433 to glycine 453, and valine 476 to phenylalanine 496. Histidine 399 is a Fe(II)-heme a binding site.

The protein belongs to the heme-copper respiratory oxidase family.

It is found in the cell membrane. It carries out the reaction 4 Fe(II)-[cytochrome c] + O2 + 8 H(+)(in) = 4 Fe(III)-[cytochrome c] + 2 H2O + 4 H(+)(out). The protein operates within energy metabolism; oxidative phosphorylation. Cytochrome c oxidase is the component of the respiratory chain that catalyzes the reduction of oxygen to water. Subunits 1-3 form the functional core of the enzyme complex. CO I is the catalytic subunit of the enzyme. Electrons originating in cytochrome c are transferred via the copper A center of subunit 2 and heme A of subunit 1 to the bimetallic center formed by heme A3 and copper B. The polypeptide is Probable cytochrome c oxidase subunit 1 (ctaD) (Mycobacterium bovis (strain ATCC BAA-935 / AF2122/97)).